The chain runs to 1937 residues: Myosin-8 (1937 aa).

A Myosin N-terminal SH3-like domain is found at 35–84 (DAKTSVFVAEPKESYVKSTIQSKEGGKVTVKTEGGATLTVREDQVFPMNP). 2 positions are modified to phosphothreonine: threonine 66 and threonine 71. The Myosin motor domain maps to 88–781 (DKIEDMAMMT…LLGLLEEMRD (694 aa)). Lysine 132 bears the N6,N6,N6-trimethyllysine mark. 181–188 (GESGAGKT) is an ATP binding site. Tyrosine 389 bears the Phosphotyrosine mark. A Phosphoserine modification is found at serine 392. Threonine 419 carries the phosphothreonine modification. Residue tyrosine 424 is modified to Phosphotyrosine. Residue serine 625 is modified to Phosphoserine. The actin-binding stretch occupies residues 658 to 680 (LNKLMTNLRSTHPHFVRCIIPNE). Histidine 756 bears the Pros-methylhistidine mark. Positions 760 to 774 (KFGHTKVFFKAGLLG) are actin-binding. The IQ domain occupies 781 to 813 (DEKLAQIITRTQAVCRGFLMRVEYQKMLQRREA). Residues 842–1937 (LLKSAETEKE…REVHTKISAE (1096 aa)) adopt a coiled-coil conformation. Residues serine 1091 and serine 1095 each carry the phosphoserine modification. A disordered region spans residues 1126 to 1146 (EAERASRAKAEKQRSDLSREL). Basic and acidic residues predominate over residues 1127-1146 (AERASRAKAEKQRSDLSREL). Phosphoserine occurs at positions 1161, 1236, 1242, and 1260. Phosphothreonine occurs at positions 1264 and 1285. A phosphoserine mark is found at serine 1291, serine 1302, and serine 1305. Tyrosine 1463 bears the Phosphotyrosine mark. Threonine 1466 carries the phosphothreonine modification. Serine 1473 bears the Phosphoserine mark. A Phosphotyrosine modification is found at tyrosine 1491. Phosphoserine is present on serine 1494. Threonine 1500 is subject to Phosphothreonine. Position 1513 is a phosphoserine (serine 1513). Threonine 1516 carries the phosphothreonine modification. Phosphoserine occurs at positions 1553, 1573, 1602, 1713, and 1725. The residue at position 1729 (threonine 1729) is a Phosphothreonine. Residue serine 1738 is modified to Phosphoserine.

It belongs to the TRAFAC class myosin-kinesin ATPase superfamily. Myosin family. As to quaternary structure, muscle myosin is a hexameric protein that consists of 2 heavy chain subunits (MHC), 2 alkali light chain subunits (MLC) and 2 regulatory light chain subunits (MLC-2).

It localises to the cytoplasm. It is found in the myofibril. Its function is as follows. Muscle contraction. The protein is Myosin-8 (MYH8) of Homo sapiens (Human).